The following is a 139-amino-acid chain: 10 kDa chaperonin 2, chloroplastic (139 aa).

Residues 1–39 constitute a chloroplast transit peptide; it reads MASTFVCSLPNPFFAFPVKATTPSTANHTLLGSRRGCLR. A cpn-10 domain region spans residues 51–138; the sequence is KVVPQADRVL…CKESDLLALV (88 aa).

Belongs to the GroES chaperonin family. In terms of tissue distribution, expressed in leaves and stems. Expressed at low levels in germinating seeds, seedlings, rosettes leaves, flowers and siliques.

It is found in the plastid. Its subcellular location is the chloroplast stroma. Its function is as follows. Functions as a co-chaperone for protein folding in chloroplasts. The polypeptide is 10 kDa chaperonin 2, chloroplastic (Arabidopsis thaliana (Mouse-ear cress)).